Reading from the N-terminus, the 278-residue chain is Undecaprenyl-diphosphatase 2 (278 aa).

The next 7 helical transmembrane spans lie at 1–21 (MSIIEAIIIGIVQGITEFLPI), 38–58 (FPGFGFEIFLHIASILAVILY), 85–105 (FMFAIYIIVATGITGVLGLLL), 118–138 (FIAGALIITGTFLIIIERFFV), 191–211 (SFLLSIPVILGTSVLAIGDLL), 223–243 (PLIISFIVTFFFSWLGIIWLI), and 251–271 (LIYFAFYCFALAIFVFFYFDH).

It belongs to the UppP family.

The protein localises to the cell membrane. The catalysed reaction is di-trans,octa-cis-undecaprenyl diphosphate + H2O = di-trans,octa-cis-undecaprenyl phosphate + phosphate + H(+). Functionally, catalyzes the dephosphorylation of undecaprenyl diphosphate (UPP). Confers resistance to bacitracin. The chain is Undecaprenyl-diphosphatase 2 from Halalkalibacterium halodurans (strain ATCC BAA-125 / DSM 18197 / FERM 7344 / JCM 9153 / C-125) (Bacillus halodurans).